The following is a 55-amino-acid chain: MVIGLFVLSIVMLIVSFIAQSFTLLSIMISFLLFTSAVVLAMFRYFRKKNAISNN.

2 helical membrane-spanning segments follow: residues 2–19 and 24–46; these read VIGL…SFIA and LLSI…FRYF.

It is found in the cell membrane. This is an uncharacterized protein from Alkalihalophilus pseudofirmus (strain ATCC BAA-2126 / JCM 17055 / OF4) (Bacillus pseudofirmus).